A 458-amino-acid polypeptide reads, in one-letter code: Putative long chain fatty acid-CoA ligase VraA (458 aa).

It belongs to the ATP-dependent AMP-binding enzyme family.

This is Putative long chain fatty acid-CoA ligase VraA (vraA) from Staphylococcus aureus (strain Mu3 / ATCC 700698).